Here is a 50-residue protein sequence, read N- to C-terminus: Protein HokA (50 aa).

The helical transmembrane segment at 7 to 24 threads the bilayer; that stretch reads LLSLIVICFTLLFFTWMI.

It belongs to the Hok/Gef family.

The protein resides in the cell inner membrane. Functionally, toxic component of a type I toxin-antitoxin (TA) system. When overexpressed kills cells within minutes; causes collapse of the transmembrane potential and arrest of respiration. Its toxic effect is probably neutralized by antisense antitoxin RNA SokA. The chain is Protein HokA from Escherichia coli (strain K12).